The following is a 904-amino-acid chain: MEVNCLTLKDLISPRQTRLDFAIEDAENAQKENIFVDRSRMTPKTPMKNEPIDLSKQRIFTPDRNPITPVKPVDRQPQVEPWTPTANLKMLISAASPDIRDREKKKELFRPIENKEDAFVNSLQLDVAGDGAVDEYEKQRPSRKQKSLGLLCQKFLARYPSYPLSTEKTTISLDEVAVSLGVERRRIYDIVNVLESLHLVSRVAKNQYGWHGRHSLPKTLRTLQRLGEEQKYEEQMACLQQKELDLMGYRFGERRKDGSPDPRDPHLLDFSEADYPSSSANSRKDKSLRIMSQKFVMLFLVSKTKIVTLDVAAKILIEESQDTPDHSKFKTKVRRLYDIANVLTSLALIKKVHVTEERGRKPAFKWIGPVDFSSIDEELLDVSASILPELKKEAYGQIRVCAKERLVRYGSFNTVHTSEKIQRKVSSEPSSPQGERQGSAYSLEIGSLAAIYRQKVEDNSQEEAFVSNTAVPPASILDPALSMDSEYCVKPLAQPVFSVAQTDLPAFSAQNGPSGQVGVPVPSAASDTENLKPALLAGQPLVYVPSTQLFMLYGSVQEGLSPESRSEEDGGGSDVPADLSVTPSAQKRLCEERDPQEEEDEPAMKRQSQEFEDSPLSLVMPKKPSSSTDLACPVTMGNGSSPPLEDACVKGQLPAAEEVTGKAAPNCYVASECGNPARNPDTEKPSNENEITKDPSLMQYLYVQSPAGLNGFNMVLPGTQTPHTVAPSPAQLPSFGVPCMFLQSPGLGPFPVLYSPAIPGPISSAPGTHPNPGPMNFGLSTLASASHLLISPAAMVNPKPSTLPCTDPQLRCQPSLNLNPVMPGSHGVIHPESPCYVRHPVSMVKAEQSPAPATPKSIQRRHRETFFKTPGSLGDPVFRRKERNQSRNTSSAQRRLEISSSGPD.

Residues 61–80 (TPDRNPITPVKPVDRQPQVE) form a disordered region. Ser-96 is modified (phosphoserine). The DNA-binding element occupies 143-212 (RKQKSLGLLC…VAKNQYGWHG (70 aa)). Residues 252–269 (GERRKDGSPDPRDPHLLD) are compositionally biased toward basic and acidic residues. The interval 252-283 (GERRKDGSPDPRDPHLLDFSEADYPSSSANSR) is disordered. A DNA-binding region spans residues 283 to 368 (RKDKSLRIMS…GRKPAFKWIG (86 aa)). Ser-411 is modified (phosphoserine). A disordered region spans residues 560 to 628 (LSPESRSEED…VMPKKPSSST (69 aa)). Residue Ser-833 is modified to Phosphoserine. The tract at residues 846-904 (AEQSPAPATPKSIQRRHRETFFKTPGSLGDPVFRRKERNQSRNTSSAQRRLEISSSGPD) is disordered. The span at 886–904 (SRNTSSAQRRLEISSSGPD) shows a compositional bias: polar residues.

The protein belongs to the E2F/DP family. In terms of assembly, interacts with HIF1A. Homodimer and heterodimer: mainly forms homodimers and, to a lesser extent, heterodimers with E2F8. Dimerization is important for DNA-binding. Interacts with MN1. In terms of tissue distribution, widely expressed with highest levels in skin and thymus and very low levels in brain, muscle and stomach. Expressed in trophoblast giant cells throughout placenta development (at protein level).

The protein localises to the nucleus. In terms of biological role, atypical E2F transcription factor that participates in various processes such as angiogenesis, polyploidization of specialized cells and DNA damage response. Mainly acts as a transcription repressor that binds DNA independently of DP proteins and specifically recognizes the E2 recognition site 5'-TTTC[CG]CGC-3'. Directly represses transcription of classical E2F transcription factors such as E2F1. Acts as a regulator of S-phase by recognizing and binding the E2-related site 5'-TTCCCGCC-3' and mediating repression of G1/S-regulated genes. Plays a key role in polyploidization of cells in placenta and liver by regulating the endocycle, probably by repressing genes promoting cytokinesis and antagonizing action of classical E2F proteins (E2F1, E2F2 and/or E2F3). Required for placental development by promoting polyploidization of trophoblast giant cells. Also involved in DNA damage response: up-regulated by p53/TP53 following genotoxic stress and acts as a downstream effector of p53/TP53-dependent repression by mediating repression of indirect p53/TP53 target genes involved in DNA replication. Acts as a promoter of sprouting angiogenesis, possibly by acting as a transcription activator: associates with HIF1A, recognizes and binds the VEGFA promoter, which is different from canonical E2 recognition site, and activates expression of the VEGFA gene. Acts as a negative regulator of keratinocyte differentiation. The sequence is that of Transcription factor E2F7 (E2f7) from Mus musculus (Mouse).